Consider the following 259-residue polypeptide: Polycomb group RING finger protein 1 (259 aa).

Alanine 2 is subject to N-acetylalanine. Residue serine 3 is modified to Phosphoserine. Lysine 24 is covalently cross-linked (Glycyl lysine isopeptide (Lys-Gly) (interchain with G-Cter in SUMO2)). The segment at cysteine 47–asparagine 86 adopts an RING-type zinc-finger fold. Residues asparagine 86–proline 247 form a required for repressor activity region. Lysine 88 participates in a covalent cross-link: Glycyl lysine isopeptide (Lys-Gly) (interchain with G-Cter in SUMO2). The tract at residues leucine 150–lysine 255 is required for the interaction with the KDM2B-SKP1 heterodimeric complex. The tract at residues glutamate 167 to lysine 255 is RING-finger and WD40-associated ubiquitin-like domain (RAWUL); sufficient for interaction with BCOR and BCORL1.

In terms of assembly, interacts with BCORL1, forming heterodimers. The PCGF1-BCORL1 heterodimeric complex interacts with the KDM2B-SKP1 heterodimeric complex to form a homotetrameric polycomb repression complex 1 (PRC1.1). Component of the repressive BCOR complex containing a Polycomb group subcomplex at least composed of RYBP, RING1 and RNF2/RING2. Specifically interacts with BCOR, RING1 and RNF2/RING2. Component of a PRC1-like complex. Interacts with CBX6, CBX7 and CBX8. Interacts with DPPA4, NANOG, POU5F1 and RYBP. As to expression, ubiquitous.

The protein resides in the nucleus. Its function is as follows. Component of the Polycomb group (PcG) multiprotein BCOR complex, a complex required to maintain the transcriptionally repressive state of some genes, such as BCL6 and the cyclin-dependent kinase inhibitor, CDKN1A. Transcriptional repressor that may be targeted to the DNA by BCL6; this transcription repressor activity may be related to PKC signaling pathway. Represses CDKN1A expression by binding to its promoter, and this repression is dependent on the retinoic acid response element (RARE element). Promotes cell cycle progression and enhances cell proliferation as well. May have a positive role in tumor cell growth by down-regulating CDKN1A. Component of a Polycomb group (PcG) multiprotein PRC1-like complex, a complex class required to maintain the transcriptionally repressive state of many genes, including Hox genes, throughout development. PcG PRC1 complex acts via chromatin remodeling and modification of histones; it mediates monoubiquitination of histone H2A 'Lys-119', rendering chromatin heritably changed in its expressibility. Within the PRC1-like complex, regulates RNF2 ubiquitin ligase activity. Regulates the expression of DPPA4 and NANOG in the NT2 embryonic carcinoma cells. This is Polycomb group RING finger protein 1 (PCGF1) from Homo sapiens (Human).